We begin with the raw amino-acid sequence, 413 residues long: Putative adhesin P1-like protein MPN_144 (413 aa).

3 stretches are compositionally biased toward polar residues: residues 1–13 (MGQQ…SAGN), 25–54 (SGDS…NLTP), and 355–376 (SFGT…VFGT). 2 disordered regions span residues 1–60 (MGQQ…DWPN) and 355–413 (SFGT…VSGH). Gly residues predominate over residues 385 to 399 (LSGGGAGGGSSGSGQ).

The protein belongs to the adhesin P1 family.

The chain is Putative adhesin P1-like protein MPN_144 from Mycoplasma pneumoniae (strain ATCC 29342 / M129 / Subtype 1) (Mycoplasmoides pneumoniae).